A 232-amino-acid chain; its full sequence is Ribose-5-phosphate isomerase A (232 aa).

Substrate is bound by residues 31 to 34 (TGST), 87 to 90 (DGAD), and 100 to 103 (KGGG). Glu-109 functions as the Proton acceptor in the catalytic mechanism. Lys-127 serves as a coordination point for substrate.

This sequence belongs to the ribose 5-phosphate isomerase family. As to quaternary structure, homodimer.

The enzyme catalyses aldehydo-D-ribose 5-phosphate = D-ribulose 5-phosphate. It functions in the pathway carbohydrate degradation; pentose phosphate pathway; D-ribose 5-phosphate from D-ribulose 5-phosphate (non-oxidative stage): step 1/1. In terms of biological role, catalyzes the reversible conversion of ribose-5-phosphate to ribulose 5-phosphate. In Bifidobacterium longum (strain NCC 2705), this protein is Ribose-5-phosphate isomerase A.